The following is a 494-amino-acid chain: Trigger factor (494 aa).

A PPIase FKBP-type domain is found at 169 to 254 (GDRITMDYVG…VKDVAAPGAV (86 aa)). Residues 440-494 (LLAEDEGEAKAETKKAAPKKKAAAKSEAAEAGEGEEAAPKKKAAPKKKASEDSAE) are disordered.

Belongs to the FKBP-type PPIase family. Tig subfamily.

The protein resides in the cytoplasm. It catalyses the reaction [protein]-peptidylproline (omega=180) = [protein]-peptidylproline (omega=0). Functionally, involved in protein export. Acts as a chaperone by maintaining the newly synthesized protein in an open conformation. Functions as a peptidyl-prolyl cis-trans isomerase. In Rhizobium etli (strain ATCC 51251 / DSM 11541 / JCM 21823 / NBRC 15573 / CFN 42), this protein is Trigger factor.